A 408-amino-acid polypeptide reads, in one-letter code: MTSKGPEEEHPSVTLFRQYLRIRTVQPKPDYGAAVAFFEETARQLGLGCQKVEVAPGYVVTVLTWPGTNPTLSSILLNSHTDVVPVFKEHWSHDPFEAFKDSEGYIYTRGAQDMKCVSIQYLEAVKRLKVEGHRFPRTIHMTFVPDEEVGGHQGMELFVQRHEFHALRAGFALDEGLANPTDAFTVFYSERSPWWVRVTSTGRPGHASRFMEDTAAEKLHKVVNSILAFREKEWQRLQSNPHLKEGSVTSVNLTKLEGGVAYNVVPATMSACFDFRVAPDVDMKAFEEQLQSWCQEAGEGVTFEFAQKFTEPRMTPTDDTDPWWAAFSGACKEMTLTLEPEIFPAATDSRYIRAVGIPALGFSPMNRTPVLLHDHNERLHEAVFLRGVDIYTRLVAALASVPALPGES.

Histidine 80 serves as a coordination point for Zn(2+). The active site involves aspartate 82. A Zn(2+)-binding site is contributed by aspartate 113. Glutamate 147 acts as the Proton acceptor in catalysis. Glutamate 148, glutamate 175, and histidine 373 together coordinate Zn(2+). Serine 408 carries the post-translational modification Phosphoserine.

Belongs to the peptidase M20A family. In terms of assembly, homodimer. It depends on Zn(2+) as a cofactor. As to expression, expressed in kidney.

The protein resides in the cytoplasm. The catalysed reaction is an N-acyl-L-amino acid + H2O = an L-alpha-amino acid + a carboxylate. It carries out the reaction an N-acetyl-L-cysteine-S-conjugate + H2O = an S-substituted L-cysteine + acetate. Its function is as follows. Involved in the hydrolysis of N-acylated or N-acetylated amino acids (except L-aspartate). The chain is Aminoacylase-1B (Acy1b) from Rattus norvegicus (Rat).